A 397-amino-acid chain; its full sequence is Tryptophan synthase beta chain 1 (397 aa).

Lys-90 is subject to N6-(pyridoxal phosphate)lysine.

The protein belongs to the TrpB family. In terms of assembly, tetramer of two alpha and two beta chains. Requires pyridoxal 5'-phosphate as cofactor.

It catalyses the reaction (1S,2R)-1-C-(indol-3-yl)glycerol 3-phosphate + L-serine = D-glyceraldehyde 3-phosphate + L-tryptophan + H2O. It functions in the pathway amino-acid biosynthesis; L-tryptophan biosynthesis; L-tryptophan from chorismate: step 5/5. Functionally, the beta subunit is responsible for the synthesis of L-tryptophan from indole and L-serine. The chain is Tryptophan synthase beta chain 1 (trpB1) from Aquifex aeolicus (strain VF5).